We begin with the raw amino-acid sequence, 194 residues long: Cysteine and glycine-rich protein 3 (194 aa).

The interaction with TCAP stretch occupies residues 1–5 (MPNWG). The region spanning 10 to 61 (CGACEKTVYHAEEIQCNGRSFHKTCFHCMACRKALDSTTVAAHESEIYCKVC) is the LIM zinc-binding 1 domain. The Nuclear localization signal motif lies at 64–69 (RRYGPK). Positions 94-105 (QSPKPARAATTS) are interaction with CLF2. Ser95, Ser111, and Ser153 each carry phosphoserine. Positions 120–171 (CPRCGKSVYAAEKVMGGGKPWHKTCFRCAICGKSLESTNVTDKDGELYCKVC) constitute an LIM zinc-binding 2 domain.

Self-associates. Oligomeric in the cytoplasm and monomeric in the nucleus. Homooligomers preferentially form along the actin cytoskeleton. Interacts with TCAP. Interacts with LDHD, MYOD1, MYOG, ACTN2, NRAP, MYF6. Interacts (via N-terminus)D with GLRX3 (via C-terminus) and PPP3CA; GLRX3 and calcineurin compete for interaction with CSRP3. Interacts with CFL2; the stoichiometry influences F-actin depolymerization and possibly two molecules of CFL2 can interact with one molecule of CSRP3 resulting in the highest functional impact; the interaction is stronger with phosphorylated CFL2. Post-translationally, phosphorylated by PKC/PRKCA.

The protein resides in the nucleus. The protein localises to the cytoplasm. It localises to the cytoskeleton. Its subcellular location is the myofibril. It is found in the sarcomere. The protein resides in the z line. Functionally, positive regulator of myogenesis. Acts as a cofactor for myogenic bHLH transcription factors such as MYOD1, and probably MYOG and MYF6. Enhances the DNA-binding activity of the MYOD1:TCF3 isoform E47 complex and may promote formation of a functional MYOD1:TCF3 isoform E47:MEF2A complex involved in myogenesis. Plays a crucial and specific role in the organization of cytosolic structures in cardiomyocytes. Could play a role in mechanical stretch sensing. May be a scaffold protein that promotes the assembly of interacting proteins at Z-line structures. It is essential for calcineurin anchorage to the Z line. Required for stress-induced calcineurin-NFAT activation. The role in regulation of cytoskeleton dynamics by association with CFL2 is reported conflictingly. Proposed to contribute to the maintenance of muscle cell integrity through an actin-based mechanism. Can directly bind to actin filaments, cross-link actin filaments into bundles without polarity selectivity and protect them from dilution- and cofilin-mediated depolymerization; the function seems to involve its self-association. In vitro can inhibit PKC/PRKCA activity. Proposed to be involved in cardiac stress signaling by down-regulating excessive PKC/PRKCA signaling. The sequence is that of Cysteine and glycine-rich protein 3 (Csrp3) from Mus musculus (Mouse).